A 354-amino-acid chain; its full sequence is Peptide chain release factor 1 (354 aa).

N5-methylglutamine is present on Gln-230.

This sequence belongs to the prokaryotic/mitochondrial release factor family. Post-translationally, methylated by PrmC. Methylation increases the termination efficiency of RF1.

The protein localises to the cytoplasm. Peptide chain release factor 1 directs the termination of translation in response to the peptide chain termination codons UAG and UAA. The polypeptide is Peptide chain release factor 1 (Pelobacter propionicus (strain DSM 2379 / NBRC 103807 / OttBd1)).